The chain runs to 163 residues: Ribonuclease H (163 aa).

The region spanning 1 to 142 (MRKQVAIFTD…CDELARTAAC (142 aa)) is the RNase H type-1 domain. 4 residues coordinate Mg(2+): Asp10, Glu48, Asp70, and Asp134.

The protein belongs to the RNase H family. As to quaternary structure, monomer. The cofactor is Mg(2+).

It localises to the cytoplasm. It carries out the reaction Endonucleolytic cleavage to 5'-phosphomonoester.. Endonuclease that specifically degrades the RNA of RNA-DNA hybrids. The chain is Ribonuclease H from Sodalis glossinidius (strain morsitans).